Here is a 210-residue protein sequence, read N- to C-terminus: Large ribosomal subunit protein uL3 (210 aa).

The interval 123-144 (KRHGQSRGPMAHGSRYHRRPGS) is disordered.

The protein belongs to the universal ribosomal protein uL3 family. Part of the 50S ribosomal subunit. Forms a cluster with proteins L14 and L19.

Functionally, one of the primary rRNA binding proteins, it binds directly near the 3'-end of the 23S rRNA, where it nucleates assembly of the 50S subunit. The sequence is that of Large ribosomal subunit protein uL3 from Alkaliphilus metalliredigens (strain QYMF).